A 336-amino-acid chain; its full sequence is Probable assembly chaperone of rpl4 (336 aa).

TPR repeat units lie at residues 39 to 72 (GRAF…SKNL), 75 to 108 (DQGY…LERL), 110 to 143 (IDKG…QPDA), and 162 to 195 (AEAL…ISRA). Positions 316–336 (DEENEEAEWETSENEEEMDED) are disordered.

Belongs to the ACL4 family.

The protein resides in the cytoplasm. It localises to the nucleus. The protein localises to the nucleolus. Its function is as follows. Acts as a chaperone for the L4 ribosomal subunit encoded by rpl4A and rpl4B, required for hierarchical ribosome assembly. Shields ribosomal protein L4 until timely release and insertion into the pre-ribosome is possible, once ribosomal protein L18 is present. The chain is Probable assembly chaperone of rpl4 from Schizosaccharomyces pombe (strain 972 / ATCC 24843) (Fission yeast).